The primary structure comprises 217 residues: Thymidylate kinase (217 aa).

11 to 18 (GLEGAGKS) contributes to the ATP binding site.

The protein belongs to the thymidylate kinase family.

The catalysed reaction is dTMP + ATP = dTDP + ADP. Its function is as follows. Phosphorylation of dTMP to form dTDP in both de novo and salvage pathways of dTTP synthesis. The chain is Thymidylate kinase from Alkalilimnicola ehrlichii (strain ATCC BAA-1101 / DSM 17681 / MLHE-1).